A 235-amino-acid chain; its full sequence is NAD-dependent protein deacylase (235 aa).

The Deacetylase sirtuin-type domain occupies 1–235 (MDLRLFKNIV…VPRFITQFLE (235 aa)). Residue 14 to 33 (GAGISAESGIRTFRDQDGLW) coordinates NAD(+). Residues Tyr-58 and Arg-61 each coordinate substrate. 95–98 (QNVD) is a binding site for NAD(+). The Proton acceptor role is filled by His-113. Residues Cys-121, Cys-124, Cys-140, and Cys-143 each contribute to the Zn(2+) site. NAD(+)-binding positions include 180–182 (GTS), 204–206 (NLK), and Ala-222.

This sequence belongs to the sirtuin family. Class III subfamily. Zn(2+) serves as cofactor.

It is found in the cytoplasm. It carries out the reaction N(6)-acetyl-L-lysyl-[protein] + NAD(+) + H2O = 2''-O-acetyl-ADP-D-ribose + nicotinamide + L-lysyl-[protein]. The catalysed reaction is N(6)-succinyl-L-lysyl-[protein] + NAD(+) + H2O = 2''-O-succinyl-ADP-D-ribose + nicotinamide + L-lysyl-[protein]. Its function is as follows. NAD-dependent lysine deacetylase and desuccinylase that specifically removes acetyl and succinyl groups on target proteins. Modulates the activities of several proteins which are inactive in their acylated form. The polypeptide is NAD-dependent protein deacylase (Bdellovibrio bacteriovorus (strain ATCC 15356 / DSM 50701 / NCIMB 9529 / HD100)).